Consider the following 173-residue polypeptide: Large ribosomal subunit protein uL10 (173 aa).

Belongs to the universal ribosomal protein uL10 family. Part of the ribosomal stalk of the 50S ribosomal subunit. The N-terminus interacts with L11 and the large rRNA to form the base of the stalk. The C-terminus forms an elongated spine to which L12 dimers bind in a sequential fashion forming a multimeric L10(L12)X complex.

Forms part of the ribosomal stalk, playing a central role in the interaction of the ribosome with GTP-bound translation factors. The polypeptide is Large ribosomal subunit protein uL10 (Christiangramia forsetii (strain DSM 17595 / CGMCC 1.15422 / KT0803) (Gramella forsetii)).